A 449-amino-acid polypeptide reads, in one-letter code: Monoacylglycerol lipase (449 aa).

Lys-82 is covalently cross-linked (Glycyl lysine isopeptide (Lys-Gly) (interchain with G-Cter in ubiquitin)). An AB hydrolase-1 domain is found at 151–392 (PMLIILHGLT…LLLETSTGGH (242 aa)). A GXSXG motif is present at residues 230-234 (GFSLG). The active-site Nucleophile is the Ser-232. Residues Asp-364 and His-392 each act as charge relay system in the active site.

The protein belongs to the AB hydrolase superfamily. AB hydrolase 4 family.

The catalysed reaction is Hydrolyzes glycerol monoesters of long-chain fatty acids.. It catalyses the reaction 1-hexadecanoylglycerol + H2O = glycerol + hexadecanoate + H(+). It carries out the reaction 1-octadecanoylglycerol + H2O = octadecanoate + glycerol + H(+). The enzyme catalyses 1-(9Z-octadecenoyl)-glycerol + H2O = glycerol + (9Z)-octadecenoate + H(+). Functionally, converts monoacylglycerides (MAG) to free fatty acids and glycerol. Has a preference for palmitoyl-MAG. Does not play a significant role in ethyl ester biosynthesis. Also possesses ester hydrolase and low but persistent TAG lipase activity. In Saccharomyces cerevisiae (strain ATCC 204508 / S288c) (Baker's yeast), this protein is Monoacylglycerol lipase.